We begin with the raw amino-acid sequence, 623 residues long: V-type proton ATPase catalytic subunit A (623 aa).

Position 252-259 (252-259 (GAFGCGKT)) interacts with ATP.

Belongs to the ATPase alpha/beta chains family. V-ATPase is a heteromultimeric enzyme composed of a peripheral catalytic V1 complex (main components: subunits A, B, C, D, E, and F) attached to an integral membrane V0 proton pore complex (main component: the proteolipid protein).

It catalyses the reaction ATP + H2O + 4 H(+)(in) = ADP + phosphate + 5 H(+)(out). Catalytic subunit of the peripheral V1 complex of vacuolar ATPase. V-ATPase vacuolar ATPase is responsible for acidifying a variety of intracellular compartments in eukaryotic cells. The chain is V-type proton ATPase catalytic subunit A from Citrus unshiu (Satsuma mandarin).